Consider the following 76-residue polypeptide: ATP synthase subunit 9, mitochondrial (76 aa).

2 helical membrane-spanning segments follow: residues 14 to 34 and 52 to 72; these read IATL…VALI and ILGF…SFLL.

The protein belongs to the ATPase C chain family. In terms of assembly, F-type ATPases have 2 components, CF(1) - the catalytic core - and CF(0) - the membrane proton channel. CF(1) has five subunits: alpha(3), beta(3), gamma(1), delta(1), epsilon(1). CF(0) has three main subunits: a, b and c.

The protein resides in the mitochondrion membrane. Its function is as follows. Mitochondrial membrane ATP synthase (F(1)F(0) ATP synthase or Complex V) produces ATP from ADP in the presence of a proton gradient across the membrane which is generated by electron transport complexes of the respiratory chain. F-type ATPases consist of two structural domains, F(1) - containing the extramembraneous catalytic core and F(0) - containing the membrane proton channel, linked together by a central stalk and a peripheral stalk. During catalysis, ATP synthesis in the catalytic domain of F(1) is coupled via a rotary mechanism of the central stalk subunits to proton translocation. Part of the complex F(0) domain. A homomeric c-ring of probably 10 subunits is part of the complex rotary element. In Candida albicans (strain SC5314 / ATCC MYA-2876) (Yeast), this protein is ATP synthase subunit 9, mitochondrial (ATP9).